The following is a 316-amino-acid chain: uncharacterized protein (316 aa).

The helical transmembrane segment at 12–34 (RWVCLTSVILFCFCIAVMRYGGV) threads the bilayer.

It is found in the membrane. This is an uncharacterized protein from Treponema pallidum (strain Nichols).